Reading from the N-terminus, the 325-residue chain is MKPSIVLYKNIPADLRERLEQHFTVHAFDGLTPDNHDELRQALQQAEGIIGSGGKIDEAFLQQTPKLRAASTISVGYDNFDVDALNAHNVLLMHTPTVLTETVADTIMSLVLATARRVVEVAERVKAGEWQGSIGADWFGVDVHHKTIGILGMGRIGLALAQRAHFGFGMPVLYNARRTHEEAEQRFNARRCDLDTLLAESDFICITLPLTDETFHMISRDQLAKMKKSGILINAGRGPVVDEAALIEALQNGTIHAAGLDVFEKEPLPVSSPLLTLPNVVALPHIGSATHETRYGMAECAVDNLIAALTGTVKENCVNPQLLKK.

Active-site residues include R237 and E266. H285 serves as the catalytic Proton donor.

The protein belongs to the D-isomer specific 2-hydroxyacid dehydrogenase family. GhrB subfamily. In terms of assembly, homodimer.

The protein resides in the cytoplasm. The catalysed reaction is glycolate + NADP(+) = glyoxylate + NADPH + H(+). It carries out the reaction (R)-glycerate + NAD(+) = 3-hydroxypyruvate + NADH + H(+). The enzyme catalyses (R)-glycerate + NADP(+) = 3-hydroxypyruvate + NADPH + H(+). Functionally, catalyzes the NADPH-dependent reduction of glyoxylate and hydroxypyruvate into glycolate and glycerate, respectively. The protein is Glyoxylate/hydroxypyruvate reductase B of Serratia proteamaculans (strain 568).